Reading from the N-terminus, the 28-residue chain is Flagellar filament 34 kDa core protein (28 aa).

This sequence belongs to the bacterial flagellin family. As to quaternary structure, the flagellum consists of an outer layer composed of repeating units of FlaA around a core that contains several antigenically related polypeptides.

It is found in the periplasmic flagellum. It localises to the periplasm. In terms of biological role, component of the core of the flagella. The sequence is that of Flagellar filament 34 kDa core protein from Treponema phagedenis.